A 185-amino-acid chain; its full sequence is Inner membrane lipoprotein DcrB (185 aa).

An N-terminal signal peptide occupies residues 1–19; it reads MRNLVKYVGIGLLVMGLAA. Residue C20 is the site of N-palmitoyl cysteine attachment. C20 carries S-diacylglycerol cysteine lipidation.

This sequence belongs to the DcrB family.

The protein localises to the cell membrane. Plays a role in cell envelope biogenesis, maintenance of cell envelope integrity and membrane homeostasis. Essential for lipoprotein maturation under conditions where membrane fluidity may be altered. The protein is Inner membrane lipoprotein DcrB of Shigella flexneri.